The chain runs to 381 residues: Arogenate dehydratase/prephenate dehydratase 2, chloroplastic (381 aa).

The tract at residues 1 to 32 (MAMHTVRLSPATQLHGGISSNLSPPNRKPNNS) is disordered. A chloroplast-targeting transit peptide spans 1-66 (MAMHTVRLSP…DANGRDNSVR (66 aa)). Positions 18-32 (ISSNLSPPNRKPNNS) are enriched in polar residues. The region spanning 100 to 275 (RVAYQGVRGA…NVTRFLMLAR (176 aa)) is the Prephenate dehydratase domain. The ACT domain maps to 289-375 (SIVFSLEEGP…TFLRVLGSYP (87 aa)).

Expressed in roots, leaves, stems, flowers and siliques. Most abundant in leaves and seeds.

It localises to the plastid. Its subcellular location is the chloroplast stroma. The catalysed reaction is L-arogenate + H(+) = L-phenylalanine + CO2 + H2O. The enzyme catalyses prephenate + H(+) = 3-phenylpyruvate + CO2 + H2O. Its pathway is amino-acid biosynthesis; L-phenylalanine biosynthesis; L-phenylalanine from L-arogenate: step 1/1. The protein operates within amino-acid biosynthesis; L-phenylalanine biosynthesis; phenylpyruvate from prephenate: step 1/1. Its function is as follows. Converts the prephenate produced from the shikimate-chorismate pathway into phenylalanine. Dehydratase that uses arogenate and prephenate as substrates. Utilzes more efficiently arogenate than prephenate. Required for chloroplast division prior to ARC5, but in an ARC3- and ARC6-dependent manner, especially involved in the Z-ring formation. The sequence is that of Arogenate dehydratase/prephenate dehydratase 2, chloroplastic from Arabidopsis thaliana (Mouse-ear cress).